A 70-amino-acid chain; its full sequence is Small ribosomal subunit protein bS21A (70 aa).

This sequence belongs to the bacterial ribosomal protein bS21 family.

The sequence is that of Small ribosomal subunit protein bS21A from Burkholderia orbicola (strain AU 1054).